The sequence spans 344 residues: Geranylgeranyl pyrophosphate synthase 10, mitochondrial (344 aa).

Residues 1 to 40 (MENREVFVYIVISIFRSLQFLFWRFRPRYNDVTSALTRPL) constitute a mitochondrion transit peptide. Positions 91, 94, and 123 each coordinate isopentenyl diphosphate. Residues Asp-130 and Asp-136 each contribute to the Mg(2+) site. Residue Arg-141 coordinates dimethylallyl diphosphate. Arg-142 is a binding site for isopentenyl diphosphate. The dimethylallyl diphosphate site is built by Lys-229, Thr-230, Gln-267, Lys-284, and Lys-294.

It belongs to the FPP/GGPP synthase family. Monomer. Requires Mg(2+) as cofactor.

It localises to the mitochondrion. The catalysed reaction is isopentenyl diphosphate + dimethylallyl diphosphate = (2E)-geranyl diphosphate + diphosphate. It carries out the reaction isopentenyl diphosphate + (2E)-geranyl diphosphate = (2E,6E)-farnesyl diphosphate + diphosphate. It catalyses the reaction isopentenyl diphosphate + (2E,6E)-farnesyl diphosphate = (2E,6E,10E)-geranylgeranyl diphosphate + diphosphate. It participates in isoprenoid biosynthesis; farnesyl diphosphate biosynthesis; farnesyl diphosphate from geranyl diphosphate and isopentenyl diphosphate: step 1/1. The protein operates within isoprenoid biosynthesis; geranyl diphosphate biosynthesis; geranyl diphosphate from dimethylallyl diphosphate and isopentenyl diphosphate: step 1/1. Its pathway is isoprenoid biosynthesis; geranylgeranyl diphosphate biosynthesis; geranylgeranyl diphosphate from farnesyl diphosphate and isopentenyl diphosphate: step 1/1. In terms of biological role, catalyzes the trans-addition of the three molecules of IPP onto DMAPP to form geranylgeranyl pyrophosphate. The protein is Geranylgeranyl pyrophosphate synthase 10, mitochondrial of Arabidopsis thaliana (Mouse-ear cress).